Consider the following 72-residue polypeptide: Guanine nucleotide-binding protein G(I)/G(S)/G(O) subunit gamma-12 (72 aa).

Ser-2 carries the N-acetylserine modification. Residues Ser-10 and Ser-26 each carry the phosphoserine modification. Tyr-42 is modified (phosphotyrosine). Residue Ser-49 is modified to Phosphoserine. The residue at position 69 (Cys-69) is a Cysteine methyl ester. Cys-69 carries S-geranylgeranyl cysteine lipidation. Residues 70-72 (IIL) constitute a propeptide, removed in mature form.

This sequence belongs to the G protein gamma family. In terms of assembly, g proteins are composed of 3 units, alpha, beta and gamma.

Its subcellular location is the cell membrane. Guanine nucleotide-binding proteins (G proteins) are involved as a modulator or transducer in various transmembrane signaling systems. The beta and gamma chains are required for the GTPase activity, for replacement of GDP by GTP, and for G protein-effector interaction. In Mus musculus (Mouse), this protein is Guanine nucleotide-binding protein G(I)/G(S)/G(O) subunit gamma-12 (Gng12).